Consider the following 337-residue polypeptide: Mitochondrial glutathione transporter SLC25A40 (337 aa).

Solcar repeat units lie at residues 14 to 132 (VTPL…LSAF), 140 to 224 (NETR…LKRW), and 234 to 328 (PTFM…GKSF). 6 consecutive transmembrane segments (helical) span residues 20 to 40 (MIASCTGAVLTSLMVTPLDVV), 104 to 124 (LWSGLPPTLVMAIPATVIYFT), 146 to 166 (IVAGVVARFGAVTVISPLELI), 200 to 221 (WAPTILRDVPFSAMYWYNYENL), 240 to 260 (FTSGALSGSFAAVATLPFDVV), and 299 to 319 (GLFTGLIPRLVKIVPACAIMI).

It belongs to the mitochondrial carrier (TC 2.A.29) family.

The protein resides in the mitochondrion inner membrane. The enzyme catalyses glutathione(in) = glutathione(out). Probable mitochondrial transporter required for glutathione import into mitochondria. Glutathione, which plays key roles in oxidative metabolism, is produced exclusively in the cytosol and is imported in many organelles. Mitochondrial glutathione is required for the activity and stability of proteins containing iron-sulfur clusters, as well as erythropoiesis. The polypeptide is Mitochondrial glutathione transporter SLC25A40 (Mus musculus (Mouse)).